A 799-amino-acid polypeptide reads, in one-letter code: Lon protease 4 (799 aa).

The Lon N-terminal domain occupies 15–204 (FPLLPLRTGV…RVAGLLAEAS (190 aa)). 356–363 (GPPGVGKT) is a binding site for ATP. Residues 595–776 (TSVAGVATGL…SQVIAAALEE (182 aa)) enclose the Lon proteolytic domain. Catalysis depends on residues Ser682 and Lys725.

It belongs to the peptidase S16 family. As to quaternary structure, homohexamer. Organized in a ring with a central cavity.

Its subcellular location is the cytoplasm. It catalyses the reaction Hydrolysis of proteins in presence of ATP.. In terms of biological role, ATP-dependent serine protease that mediates the selective degradation of mutant and abnormal proteins as well as certain short-lived regulatory proteins. Required for cellular homeostasis and for survival from DNA damage and developmental changes induced by stress. Degrades polypeptides processively to yield small peptide fragments that are 5 to 10 amino acids long. Binds to DNA in a double-stranded, site-specific manner. The protein is Lon protease 4 of Sorangium cellulosum (strain So ce56) (Polyangium cellulosum (strain So ce56)).